The following is a 178-amino-acid chain: Ribosome maturation factor RimM (178 aa).

In terms of domain architecture, PRC barrel spans 101 to 178; sequence TDEYYWYQLV…VMRVEWDADF (78 aa).

The protein belongs to the RimM family. In terms of assembly, binds ribosomal protein uS19.

The protein resides in the cytoplasm. In terms of biological role, an accessory protein needed during the final step in the assembly of 30S ribosomal subunit, possibly for assembly of the head region. Essential for efficient processing of 16S rRNA. May be needed both before and after RbfA during the maturation of 16S rRNA. It has affinity for free ribosomal 30S subunits but not for 70S ribosomes. The chain is Ribosome maturation factor RimM from Pseudomonas entomophila (strain L48).